The primary structure comprises 225 residues: Phosphoglycolate phosphatase (225 aa).

Asp11 functions as the Nucleophile in the catalytic mechanism. The Mg(2+) site is built by Asp11, Asp13, and Asp174.

The protein belongs to the HAD-like hydrolase superfamily. CbbY/CbbZ/Gph/YieH family. Mg(2+) serves as cofactor.

The enzyme catalyses 2-phosphoglycolate + H2O = glycolate + phosphate. It participates in organic acid metabolism; glycolate biosynthesis; glycolate from 2-phosphoglycolate: step 1/1. Specifically catalyzes the dephosphorylation of 2-phosphoglycolate. Is involved in the dissimilation of the intracellular 2-phosphoglycolate formed during the DNA repair of 3'-phosphoglycolate ends, a major class of DNA lesions induced by oxidative stress. This Nitrosococcus oceani (strain ATCC 19707 / BCRC 17464 / JCM 30415 / NCIMB 11848 / C-107) protein is Phosphoglycolate phosphatase.